An 83-amino-acid chain; its full sequence is Small ribosomal subunit protein eS21 (83 aa).

An N-acetylmethionine modification is found at Met1. Lys81 bears the N6-acetyllysine mark.

Belongs to the eukaryotic ribosomal protein eS21 family. As to quaternary structure, component of the 40S small ribosomal subunit.

It is found in the cytoplasm. Its subcellular location is the cytosol. It localises to the rough endoplasmic reticulum. Functionally, component of the small ribosomal subunit. The ribosome is a large ribonucleoprotein complex responsible for the synthesis of proteins in the cell. The chain is Small ribosomal subunit protein eS21 (Rps21) from Mus musculus (Mouse).